Here is an 800-residue protein sequence, read N- to C-terminus: DNA mismatch repair protein MutS (800 aa).

Position 616-623 (616-623) interacts with ATP; that stretch reads GPNMGGKS.

Belongs to the DNA mismatch repair MutS family.

Functionally, this protein is involved in the repair of mismatches in DNA. It is possible that it carries out the mismatch recognition step. This protein has a weak ATPase activity. This Buchnera aphidicola subsp. Baizongia pistaciae (strain Bp) protein is DNA mismatch repair protein MutS.